Here is a 310-residue protein sequence, read N- to C-terminus: Serine/threonine-protein phosphatase 4 catalytic subunit (310 aa).

Aspartate 53, histidine 55, aspartate 81, and asparagine 113 together coordinate Mn(2+). The Proton donor role is filled by histidine 114. The Mn(2+) site is built by histidine 163 and histidine 237. A Leucine methyl ester modification is found at leucine 310.

This sequence belongs to the PPP phosphatase family. PP-4 (PP-X) subfamily. In terms of assembly, catalytic subunit of the histone H2A phosphatase complex (HTP-C) containing PPH3, PSY2 and PSY4. Requires Mn(2+) as cofactor.

Its subcellular location is the cytoplasm. The protein localises to the nucleus. The enzyme catalyses O-phospho-L-seryl-[protein] + H2O = L-seryl-[protein] + phosphate. It catalyses the reaction O-phospho-L-threonyl-[protein] + H2O = L-threonyl-[protein] + phosphate. Functionally, involved in the dephosphorylation and activation of the transcription factor GLN3 in response to nutrient availability. Forms the histone H2A phosphatase complex in association with the regulatory subunits PSY2 and PSY4, which dephosphorylates H2AS128ph (gamma-H2A) that has been displaced from sites of DNA lesions in the double-stranded DNA break repair process. Dephosphorylation is necessary for efficient recovery from the DNA damage checkpoint. This is Serine/threonine-protein phosphatase 4 catalytic subunit (PPH3) from Eremothecium gossypii (strain ATCC 10895 / CBS 109.51 / FGSC 9923 / NRRL Y-1056) (Yeast).